The chain runs to 157 residues: Protein NrdI (157 aa).

The protein belongs to the NrdI family.

Functionally, probably involved in ribonucleotide reductase function. The chain is Protein NrdI from Mycoplasma mycoides subsp. mycoides SC (strain CCUG 32753 / NCTC 10114 / PG1).